A 156-amino-acid chain; its full sequence is Large ribosomal subunit protein uL22 (156 aa).

Belongs to the universal ribosomal protein uL22 family. Part of the 50S ribosomal subunit.

Functionally, this protein binds specifically to 23S rRNA. It makes multiple contacts with different domains of the 23S rRNA in the assembled 50S subunit and ribosome. In terms of biological role, the globular domain of the protein is located near the polypeptide exit tunnel on the outside of the subunit, while an extended beta-hairpin is found that lines the wall of the exit tunnel in the center of the 70S ribosome. In Methanocaldococcus jannaschii (strain ATCC 43067 / DSM 2661 / JAL-1 / JCM 10045 / NBRC 100440) (Methanococcus jannaschii), this protein is Large ribosomal subunit protein uL22.